The sequence spans 159 residues: Large ribosomal subunit protein uL10 (159 aa).

The protein belongs to the universal ribosomal protein uL10 family. As to quaternary structure, part of the ribosomal stalk of the 50S ribosomal subunit. The N-terminus interacts with L11 and the large rRNA to form the base of the stalk. The C-terminus forms an elongated spine to which L12 dimers bind in a sequential fashion forming a multimeric L10(L12)X complex.

In terms of biological role, forms part of the ribosomal stalk, playing a central role in the interaction of the ribosome with GTP-bound translation factors. The polypeptide is Large ribosomal subunit protein uL10 (Campylobacter lari (strain RM2100 / D67 / ATCC BAA-1060)).